Reading from the N-terminus, the 296-residue chain is Haloalkane dehalogenase (296 aa).

One can recognise an AB hydrolase-1 domain in the interval 31–155 (PILFQHGNPT…QDRDLFQAFR (125 aa)). Asparagine 38 provides a ligand contact to chloride. Aspartate 108 functions as the Nucleophile in the catalytic mechanism. Tryptophan 109 contributes to the chloride binding site. Glutamate 132 (proton donor) is an active-site residue. Residue histidine 272 is the Proton acceptor of the active site.

It belongs to the haloalkane dehalogenase family. Type 2 subfamily. As to quaternary structure, monomer.

It is found in the periplasm. The enzyme catalyses 1-haloalkane + H2O = a halide anion + a primary alcohol + H(+). It carries out the reaction (3R,6R)-1,3,4,6-tetrachlorocyclohexa-1,4-diene + 2 H2O = 2,5-dichlorocyclohexa-2,5-dien-1,4-diol + 2 chloride + 2 H(+). It functions in the pathway xenobiotic degradation; gamma-hexachlorocyclohexane degradation. With respect to regulation, competitively inhibited by the key pollutants 1,2-dichloroethane (1,2-DCE) and 1,2-dichloropropane (1,2-DCP). Functionally, catalyzes hydrolytic cleavage of carbon-halogen bonds in halogenated aliphatic compounds, leading to the formation of the corresponding primary alcohols, halide ions and protons. Has a broad substrate specificity since not only monochloroalkanes (C3 to C10) but also dichloroalkanes (&gt; C3), bromoalkanes, and chlorinated aliphatic alcohols are good substrates. Shows almost no activity with 1,2-dichloroethane, but very high activity with the brominated analog. Is involved in the degradation of the important environmental pollutant gamma-hexachlorocyclohexane (gamma-HCH or lindane) as it also catalyzes conversion of 1,3,4,6-tetrachloro-1,4-cyclohexadiene (1,4-TCDN) to 2,5-dichloro-2,5-cyclohexadiene-1,4-diol (2,5-DDOL) via the intermediate 2,4,5-trichloro-2,5-cyclohexadiene-1-ol (2,4,5-DNOL). This degradation pathway allows S.japonicum UT26 to grow on gamma-HCH as the sole source of carbon and energy. The protein is Haloalkane dehalogenase of Sphingobium indicum (strain DSM 16413 / CCM 7287 / MTCC 6362 / UT26 / NBRC 101211 / UT26S) (Sphingobium japonicum).